Consider the following 276-residue polypeptide: 3' cyclic ADP-D-ribose synthase HopAM1 (276 aa).

Residues Val20–Ser38 are compositionally biased toward polar residues. Positions Val20 to Lys39 are disordered. The segment at Lys165–Asp214 is TIR domain. The active site involves Gln190.

In terms of assembly, homodimer.

The protein localises to the host cytoplasm. It is found in the host cytosol. It carries out the reaction NAD(+) = 3'cADPR + nicotinamide + H(+). Functionally, NAD(+) hydrolase (NADase) that cleaves NAD(+) into nicotinamide and 3' cyclic ADP-D-ribose (3'cADPR, v2-cADPR). Upon infiltration of A.thaliana with this bacteria an effector-triggered immunity-like phenotype (ETI-like, cell death with severe chlorosis) is seen, 3'cADPR levels rise while NAD(+) levels remain constant. Plant immune responses are suppressed. Triggers hypersensitive response-like cell death in Nicotiana tabacum cv. Xanthi and N.benthamiana when transiently expressed, depletes NAD(+) in N.benthamiana. Causes cell death upon induction in yeast due to NAD(+) depletion and/or 3'cADPR itself. Transgenic A.thaliana expressing HopAM1 suppresses its plant immune system upon challenge; the plants produce 3'cADPR without significantly depleting NAD(+). This Pseudomonas syringae pv. tomato (strain ATCC BAA-871 / DC3000) protein is 3' cyclic ADP-D-ribose synthase HopAM1.